Here is a 99-residue protein sequence, read N- to C-terminus: Putative RNA-binding protein RbpE (99 aa).

One can recognise an RRM domain in the interval 2–79 (SIYVGNLSYS…RVLKVNKARP (78 aa)). Residues 78-99 (RPREEKGARSGGGSWSRNNGGY) are disordered. Residues 86–99 (RSGGGSWSRNNGGY) show a composition bias toward gly residues.

The sequence is that of Putative RNA-binding protein RbpE (rbpE) from Nostoc sp. (strain PCC 7120 / SAG 25.82 / UTEX 2576).